Here is a 195-residue protein sequence, read N- to C-terminus: Imidazoleglycerol-phosphate dehydratase (195 aa).

Belongs to the imidazoleglycerol-phosphate dehydratase family.

The protein resides in the cytoplasm. It carries out the reaction D-erythro-1-(imidazol-4-yl)glycerol 3-phosphate = 3-(imidazol-4-yl)-2-oxopropyl phosphate + H2O. It participates in amino-acid biosynthesis; L-histidine biosynthesis; L-histidine from 5-phospho-alpha-D-ribose 1-diphosphate: step 6/9. The polypeptide is Imidazoleglycerol-phosphate dehydratase (Roseobacter denitrificans (strain ATCC 33942 / OCh 114) (Erythrobacter sp. (strain OCh 114))).